Here is a 144-residue protein sequence, read N- to C-terminus: Glutamyl-tRNA(Gln) amidotransferase subunit C, mitochondrial (144 aa).

The N-terminal 17 residues, 1–17 (MFRRSVSFVRSHVLRSF), are a transit peptide targeting the mitochondrion.

This sequence belongs to the GatC family. In terms of assembly, subunit of the heterotrimeric GatCAB amidotransferase (AdT) complex, composed of A, B and C subunits.

The protein resides in the mitochondrion. The catalysed reaction is L-glutamyl-tRNA(Gln) + L-glutamine + ATP + H2O = L-glutaminyl-tRNA(Gln) + L-glutamate + ADP + phosphate + H(+). In terms of biological role, allows the formation of correctly charged Gln-tRNA(Gln) through the transamidation of misacylated Glu-tRNA(Gln) in the mitochondria. The reaction takes place in the presence of glutamine and ATP through an activated gamma-phospho-Glu-tRNA(Gln). The chain is Glutamyl-tRNA(Gln) amidotransferase subunit C, mitochondrial from Ixodes scapularis (Black-legged tick).